The chain runs to 96 residues: Guanyl-specific ribonuclease Sa (96 aa).

A disulfide bond links Cys-7 and Cys-96. Residue Glu-54 is the Proton acceptor of the active site. The active-site Proton donor is His-85.

It belongs to the ribonuclease N1/T1 family.

The protein localises to the secreted. It catalyses the reaction [RNA] containing guanosine + H2O = an [RNA fragment]-3'-guanosine-3'-phosphate + a 5'-hydroxy-ribonucleotide-3'-[RNA fragment].. The polypeptide is Guanyl-specific ribonuclease Sa (rnaSA) (Kitasatospora aureofaciens (Streptomyces aureofaciens)).